The sequence spans 274 residues: Large ribosomal subunit protein uL2 (274 aa).

Disordered stretches follow at residues 21 to 59 (KVGLSKDEPEKSLTSGKKSSGGRNNHGRITTRHRGGGHK) and 224 to 274 (AMNP…QLKG). The segment covering 32–42 (SLTSGKKSSGG) has biased composition (low complexity). Over residues 45–59 (NHGRITTRHRGGGHK) the composition is skewed to basic residues. A compositionally biased stretch (basic and acidic residues) spans 263–274 (KSSDKYIKQLKG).

Belongs to the universal ribosomal protein uL2 family. In terms of assembly, part of the 50S ribosomal subunit. Forms a bridge to the 30S subunit in the 70S ribosome.

Its function is as follows. One of the primary rRNA binding proteins. Required for association of the 30S and 50S subunits to form the 70S ribosome, for tRNA binding and peptide bond formation. It has been suggested to have peptidyltransferase activity; this is somewhat controversial. Makes several contacts with the 16S rRNA in the 70S ribosome. The chain is Large ribosomal subunit protein uL2 from Wolbachia pipientis wMel.